Consider the following 512-residue polypeptide: Spermatocyte protein spe-8 (512 aa).

Positions 1 to 85 are disordered; that stretch reads MRSKSSEGDL…PKPSSDNNNS (85 aa). A compositionally biased stretch (basic and acidic residues) spans 15 to 41; sequence TQSREDKETTATYSEDTKPETQKERNA. A compositionally biased stretch (pro residues) spans 68-78; that stretch reads EAPPPPPPPKP. Residues 114–205 form the SH2 domain; it reads FYHGFMGRNE…YEGMTLICGL (92 aa). The Protein kinase domain maps to 217 to 485; the sequence is VTLNKKLGEG…KEEVGFHEIE (269 aa). ATP is bound by residues 223 to 231 and Lys-250; that span reads LGEGQFGEV. The Proton acceptor role is filled by Asp-344.

This sequence belongs to the protein kinase superfamily. Tyr protein kinase family. Fes/fps subfamily. In terms of tissue distribution, expression is restricted to male germline.

Its subcellular location is the cell membrane. The protein localises to the cytoplasm. It catalyses the reaction L-tyrosyl-[protein] + ATP = O-phospho-L-tyrosyl-[protein] + ADP + H(+). In terms of biological role, probable non-receptor tyrosine-protein kinase which plays a role in spermatid activation (spermiogenesis) in hermaphrodites. This is Spermatocyte protein spe-8 from Caenorhabditis elegans.